The following is an 87-amino-acid chain: Small ribosomal subunit protein bS20 (87 aa).

Residues M1–R29 are disordered. Polar residues predominate over residues H20–R29.

It belongs to the bacterial ribosomal protein bS20 family.

In terms of biological role, binds directly to 16S ribosomal RNA. The protein is Small ribosomal subunit protein bS20 of Janthinobacterium sp. (strain Marseille) (Minibacterium massiliensis).